We begin with the raw amino-acid sequence, 65 residues long: Beta-defensin 106A (65 aa).

Positions 1–20 (MRTFLFLFVVLFFLTPAKNA) are cleaved as a signal peptide. 3 cysteine pairs are disulfide-bonded: cysteine 26/cysteine 53, cysteine 33/cysteine 47, and cysteine 37/cysteine 54.

Belongs to the beta-defensin family. In terms of assembly, monomer. Interacts with CCR2 (via extracellular N-terminal region); this interaction may preferentially require specific tyrosine sulfation on CCR2.

The protein localises to the secreted. It localises to the membrane. Functionally, has antibacterial activity. Acts as a ligand for C-C chemokine receptor CCR2. This chain is Beta-defensin 106A (DEFB106A), found in Hylobates lar (Lar gibbon).